A 2201-amino-acid chain; its full sequence is MALPRLTGALRSFSNVTKQDNYNEEVADLQMKRSKLHEQIVGLDLTWMKIVKFLNEKLEKSEMQRVNEDLKAILQAAKQIVGTDNGKEAIESAAAFLFKTFHLKDCVGHQETKAIKQMFGPFPSSSATAACDATNRITSHFCKDSLTALVQMTTDENGDRVLFGKNLAFSFDMHDLDHFDELPINGESQKTISLDYKKFLTDHLQDHSTLNRKPAEKTNDSFLWCEVEKYLNATLNEMAEATRIEDLCCTLYDMLASVKSGDELQDELFELLGPDGLELIEKLLQNRVTIVDRFLNSSNDHKLQALQDNCKKILGENAKPNYGCQVTIQSEQEKQLMKQYRREEKRIARREKKAGEDGEATEGLLCFDPKELRIHREQALMNARNVPILSRQRDTDVEKIRYPHVYDSQAEAMRTSAFIAGAKMILPEGIQRENNKIYEEVKIPYTEPMPIGFEEKPVYIQDLDEIGQLAFKGMRRLNRIQSIVFETAYNTNENMLICAPTGAGKTNIAMLTVLHEIRQHFQQGVIKKNEFKIVYVAPMKALAAEMTNYFSKRLEPLGIVVKELTGDMQLSKNEILRTQMLVTTPEKWDVVTRKSVGDVALSQIVKLLILDEVHLLHEDRGPVLESIVARTLRQVESTQSMIRILGLSATLPNYLDVATFLHVNPCIGLFFFDGRFRPVPLGQTFLGIKSANKVQQLNNMDEVCYESVLKQVKAGHQVMVFVHARNATVRTAMSLIERAKNNGQICYFLPTQGPEYGHAEKQVQKSRNRQVRELFPDGFSIHHAGMLRQDRNLVESLFSNGHIKVLVCTATLAWGVNLPAHAVIIKGTQIYAAKRGSFVDLGILDVMQIFGRAGRPQFDKFGEGIIITTHDKLSHYLSLLTQQNPIESQFLESLADNLNAEIALGTVTNVEEAVKWISYTYLYVRMRANPLVYGISHKAYQIDPTLAKHREQLVIEVGRKLDKARMIRFEERTGYFSSTDLGRTASHYYIKYNTIETFNELFDAHKTESDIFAIVSKAEEFDQIKVREEEIEELDTLLSNFCELSAPGGVENSYGKINILLQTYISRGEVDSFSLISDSAYVAQNAARIVRALFEIALRKRWPAMTYRLLNLSKVIDKRLWGWTSPLRQFSVLPPHILTRLEEKNLTVDKLKDMRKDEIGHILHHVNIGLKVKQCVHQIPSVTMEASIQPITRTVLRVTLSISPDFSWNDQVHGTVGEPWWIWVEDPTNDHIYHSEYFLVLKKQVISKEAQLLVFTIPIFEPLPSQYYIRAVSDRWLGAEAVCIINFQHLILPERHPPHTELLDLQPLPVTALGCEAYEALYNFSHFNPVQTQIFHTLYHTDCNVLLGAPTGSGKTVAAELAIFRVFNKYPTSKAVYIAPLKALVRERMDDWKVRIEEKLGKKVIELTGDVTPDMKSIAKADLIVTTPEKWDGVSRSWQNRNYVKQVTILIIDEIHLLGEERGPVLEVIVSRTNFISSHTEKPVRIVGLSTALANARDLADWLNIRQMGLFNFRPSVRPVPLEVHIQGFPGQHYCPRMASMNKPTFQAIRSHSPAKPVLIFVSSRRQTRLTALELIAFLATEEDPKQWLNMDEREMENIIGTIRDSNLKLTLAFGIGMHHAGLHERDRKTVEELFVNCKIQVLIATSTLAWGVNFPAHLVIIKGTEYYDGKTRRYVDFPITDVLQMMGRAGRPQFDDQGKAVILVHDIKKDFYKKFLYEPFPVESSLLGVLSDHLNAEIAGGTITSKQDAMDYITWTYFFRRLIMNPSYYNLSDVSHDSVNKFLSNLVEKSLVELEHSYCIEIGEDNRSIEPLTYGRIASYYYLKHQTVKMFKERLKPECGTEELLSILSDAEEYTDLPVRHNEDHMNSELAKCLPLESNPHSFDSPHTKAHLLLQAHLSRTMLPCPDYDTDTKTVLDQALRVCQAMLDVAAHQGWLVTVLNITSLVQMVIQGRWLKDSSLLTIPHIENHHLHIFRKWSPGMKGPHAGYHGSIECLPELIHACAGKDHVFSSMIEKELPAPKMKQAWNFLSHLPVIDVGLSVKGWWDDAAEGHDEISITTVASDKHSDNRWVRLHADQEYVLQVSLQRVSLGFHKGKQDSHAVTPRFPKSKDEGWFLILGEVDKRELIALKRVGYVRSHHMVSISFYTPEVPGRYIYTLYFMSDCYLGLDQQYDIHLHVTPASISAQADEISDALTDLKVK.

Residue Ser-12 is modified to Phosphoserine. Coiled-coil stretches lie at residues 18-81 (KQDN…KQIV) and 328-356 (IQSE…KAGE). A Helicase ATP-binding 1 domain is found at 486–669 (ETAYNTNENM…FLHVNPCIGL (184 aa)). 499-506 (APTGAGKT) contributes to the ATP binding site. Position 572 is an N6-acetyllysine (Lys-572). The short motif at 611–614 (DEVH) is the DEVH box element. A Helicase C-terminal 1 domain is found at 696 to 914 (QLNNMDEVCY…GTVTNVEEAV (219 aa)). In terms of domain architecture, SEC63 1 spans 978-1287 (STDLGRTASH…GAEAVCIINF (310 aa)). The Helicase ATP-binding 2 domain maps to 1336-1511 (HTLYHTDCNV…WLNIRQMGLF (176 aa)). 1349–1356 (APTGSGKT) lines the ATP pocket. The short motif at 1453 to 1456 (DEIH) is the DEIH box element. In terms of domain architecture, Helicase C-terminal 2 spans 1544–1739 (PTFQAIRSHS…VLSDHLNAEI (196 aa)). The 365-residue stretch at 1812 to 2176 (PLTYGRIASY…LGLDQQYDIH (365 aa)) folds into the SEC63 2 domain.

It belongs to the helicase family. Identified in the ASCC complex that contains ASCC1, ASCC2 and ASCC3. Functions as a scaffolding subunit that interacts directly with both ASCC1 and ASCC2. Interacts directly with ALKBH3, and thereby recruits ALKBH3 to the ASCC complex. Part of the ASC-1/TRIP4 complex, that contains TRIP4, ASCC1, ASCC2 and ASCC3. Part of the RQT (ribosome quality control trigger) complex, that contains ASCC2, ASCC3 and TRIP4. Associates with ribosomes; recruited to collided ribosomes. Interacts with ZCCHC4. Interacts with ZNF598. Interacts with RPS3.

The protein resides in the nucleus. The protein localises to the nucleus speckle. It is found in the cytoplasm. Its subcellular location is the cytosol. The catalysed reaction is Couples ATP hydrolysis with the unwinding of duplex DNA by translocating in the 3'-5' direction.. It carries out the reaction ATP + H2O = ADP + phosphate + H(+). ATPase involved both in DNA repair and rescue of stalled ribosomes. 3'-5' DNA helicase involved in repair of alkylated DNA: promotes DNA unwinding to generate single-stranded substrate needed for ALKBH3, enabling ALKBH3 to process alkylated N3-methylcytosine (3mC) within double-stranded regions. Also involved in activation of the ribosome quality control (RQC) pathway, a pathway that degrades nascent peptide chains during problematic translation. Drives the splitting of stalled ribosomes that are ubiquitinated in a ZNF598-dependent manner, as part of the ribosome quality control trigger (RQT) complex. Part of the ASC-1 complex that enhances NF-kappa-B, SRF and AP1 transactivation. This chain is Activating signal cointegrator 1 complex subunit 3 (ascc3), found in Bos taurus (Bovine).